Reading from the N-terminus, the 214-residue chain is CRISPR-associated protein Cas5 (214 aa).

The protein belongs to the CRISPR-associated protein Cas5 family.

In terms of biological role, CRISPR (clustered regularly interspaced short palindromic repeat) is an adaptive immune system that provides protection against mobile genetic elements (viruses, transposable elements and conjugative plasmids). CRISPR clusters contain spacers, sequences complementary to antecedent mobile elements, and target invading nucleic acids. CRISPR clusters are transcribed and processed into CRISPR RNA (crRNA). Its function is as follows. Has a role in fruiting body development, sporulation and aggregation. The protein is CRISPR-associated protein Cas5 (devS) of Myxococcus xanthus (strain DK1622).